The chain runs to 206 residues: ATP-dependent Clp protease proteolytic subunit 1 (206 aa).

Serine 103 serves as the catalytic Nucleophile. Residue histidine 128 is part of the active site.

This sequence belongs to the peptidase S14 family. Fourteen ClpP subunits assemble into 2 heptameric rings which stack back to back to give a disk-like structure with a central cavity, resembling the structure of eukaryotic proteasomes.

Its subcellular location is the cytoplasm. It carries out the reaction Hydrolysis of proteins to small peptides in the presence of ATP and magnesium. alpha-casein is the usual test substrate. In the absence of ATP, only oligopeptides shorter than five residues are hydrolyzed (such as succinyl-Leu-Tyr-|-NHMec, and Leu-Tyr-Leu-|-Tyr-Trp, in which cleavage of the -Tyr-|-Leu- and -Tyr-|-Trp bonds also occurs).. Its function is as follows. Cleaves peptides in various proteins in a process that requires ATP hydrolysis. Has a chymotrypsin-like activity. Plays a major role in the degradation of misfolded proteins. This chain is ATP-dependent Clp protease proteolytic subunit 1, found in Protochlamydia amoebophila (strain UWE25).